Consider the following 210-residue polypeptide: NAD(P)H-quinone oxidoreductase subunit I (210 aa).

2 consecutive 4Fe-4S ferredoxin-type domains span residues 55–84 (GRIH…VDWV) and 95–124 (RNYS…MTEE). [4Fe-4S] cluster-binding residues include Cys-64, Cys-67, Cys-70, Cys-74, Cys-104, Cys-107, Cys-110, and Cys-114.

It belongs to the complex I 23 kDa subunit family. NDH-1 is composed of at least 11 different subunits. Requires [4Fe-4S] cluster as cofactor.

The protein resides in the cellular thylakoid membrane. The catalysed reaction is a plastoquinone + NADH + (n+1) H(+)(in) = a plastoquinol + NAD(+) + n H(+)(out). The enzyme catalyses a plastoquinone + NADPH + (n+1) H(+)(in) = a plastoquinol + NADP(+) + n H(+)(out). In terms of biological role, NDH-1 shuttles electrons from an unknown electron donor, via FMN and iron-sulfur (Fe-S) centers, to quinones in the respiratory and/or the photosynthetic chain. The immediate electron acceptor for the enzyme in this species is believed to be plastoquinone. Couples the redox reaction to proton translocation, and thus conserves the redox energy in a proton gradient. The polypeptide is NAD(P)H-quinone oxidoreductase subunit I (Synechococcus sp. (strain CC9902)).